A 96-amino-acid polypeptide reads, in one-letter code: Keratin-associated protein 12-3 (96 aa).

Tandem repeats lie at residues 10–14, 15–19, 24–28, 30–34, 35–39, 45–49, 50–54, 55–59, 60–64, 70–74, 75–79, 80–84, 85–89, and 90–94. A 14 X 5 AA approximate repeats region spans residues 10-94; the sequence is CQPTCCIHSP…CRPISCSTPS (85 aa).

The protein belongs to the KRTAP type 12 family. Interacts with hair keratins. Restricted to a narrow region of the hair fiber cuticle, lying approximately 20 cell layers above the apex of the dermal papilla of the hair root; not detected in any other tissues.

In terms of biological role, in the hair cortex, hair keratin intermediate filaments are embedded in an interfilamentous matrix, consisting of hair keratin-associated proteins (KRTAP), which are essential for the formation of a rigid and resistant hair shaft through their extensive disulfide bond cross-linking with abundant cysteine residues of hair keratins. The matrix proteins include the high-sulfur and high-glycine-tyrosine keratins. In Homo sapiens (Human), this protein is Keratin-associated protein 12-3 (KRTAP12-3).